The chain runs to 138 residues: Transcription antitermination protein NusB (138 aa).

The protein belongs to the NusB family.

Its function is as follows. Involved in transcription antitermination. Required for transcription of ribosomal RNA (rRNA) genes. Binds specifically to the boxA antiterminator sequence of the ribosomal RNA (rrn) operons. This is Transcription antitermination protein NusB from Helicobacter acinonychis (strain Sheeba).